A 98-amino-acid polypeptide reads, in one-letter code: Protein E7 (98 aa).

The E7 terminal domain stretch occupies residues 1–40 (MRGETPTLQDYVLDLQPEATDLHCYEQLPDSSDEEDVIDS). The LXCXE motif; interaction with host RB1 and TMEM173/STING motif lies at 22 to 26 (LHCYE). A zinc finger lies at 58–94 (CCQCKSTLRLCVQSTQVDIRILQELLMGSFGIVCPNC). Positions 76–84 (IRILQELLM) match the Nuclear export signal motif.

It belongs to the papillomaviridae E7 protein family. In terms of assembly, homodimer. Homooligomer. Interacts with host RB1; this interaction induces dissociation of RB1-E2F1 complex thereby disrupting RB1 activity. Interacts with host EP300; this interaction represses EP300 transcriptional activity. Interacts with protein E2; this interaction inhibits E7 oncogenic activity. Interacts with host TMEM173/STING; this interaction impairs the ability of TMEM173/STING to sense cytosolic DNA and promote the production of type I interferon (IFN-alpha and IFN-beta). Post-translationally, highly phosphorylated.

The protein localises to the host cytoplasm. The protein resides in the host nucleus. In terms of biological role, E7 protein has both transforming and trans-activating activities. Disrupts the function of host retinoblastoma protein RB1/pRb, which is a key regulator of the cell cycle. Induces the disassembly of the E2F1 transcription factors from RB1, with subsequent transcriptional activation of E2F1-regulated S-phase genes. Inactivation of the ability of RB1 to arrest the cell cycle is critical for cellular transformation, uncontrolled cellular growth and proliferation induced by viral infection. Stimulation of progression from G1 to S phase allows the virus to efficiently use the cellular DNA replicating machinery to achieve viral genome replication. Interferes with histone deacetylation mediated by HDAC1 and HDAC2, leading to activation of transcription. Its function is as follows. Plays a role in viral genome replication by driving entry of quiescent cells into the cell cycle. Stimulation of progression from G1 to S phase allows the virus to efficiently use the cellular DNA replicating machinery to achieve viral genome replication. E7 protein has both transforming and trans-activating activities. Induces the disassembly of the E2F1 transcription factor from RB1, with subsequent transcriptional activation of E2F1-regulated S-phase genes. Interferes with host histone deacetylation mediated by HDAC1 and HDAC2, leading to transcription activation. Also plays a role in the inhibition of both antiviral and antiproliferative functions of host interferon alpha. Interaction with host TMEM173/STING impairs the ability of TMEM173/STING to sense cytosolic DNA and promote the production of type I interferon (IFN-alpha and IFN-beta). The protein is Protein E7 of Homo sapiens (Human).